Here is a 200-residue protein sequence, read N- to C-terminus: Peptidyl-tRNA hydrolase (200 aa).

Tyrosine 14 contributes to the tRNA binding site. Residue histidine 19 is the Proton acceptor of the active site. Phenylalanine 64, asparagine 66, and asparagine 112 together coordinate tRNA.

Belongs to the PTH family. In terms of assembly, monomer.

The protein localises to the cytoplasm. The catalysed reaction is an N-acyl-L-alpha-aminoacyl-tRNA + H2O = an N-acyl-L-amino acid + a tRNA + H(+). Hydrolyzes ribosome-free peptidyl-tRNAs (with 1 or more amino acids incorporated), which drop off the ribosome during protein synthesis, or as a result of ribosome stalling. Functionally, catalyzes the release of premature peptidyl moieties from peptidyl-tRNA molecules trapped in stalled 50S ribosomal subunits, and thus maintains levels of free tRNAs and 50S ribosomes. This is Peptidyl-tRNA hydrolase from Maricaulis maris (strain MCS10) (Caulobacter maris).